We begin with the raw amino-acid sequence, 189 residues long: MRCPFCRGDDSRVVDSREVEDGQAIRRRRSCSGCGRRFTTIEELVLSVVKRSGVTEPFSREKVVRGVARACQGRPVEEDALQQLAHQVEDTVRSLGVSELPSHEVGLAILGPLRELDEVAYLRFASVYRAFSSVEDFEKEIADLRSLRGAARLPEGPEAAQGGPESKAGNGQAAGSGDPEGVKAEKSSE.

A zinc finger spans residues 3–34 (CPFCRGDDSRVVDSREVEDGQAIRRRRSCSGC). The region spanning 46 to 136 (LSVVKRSGVT…VYRAFSSVED (91 aa)) is the ATP-cone domain. Residues 152–189 (RLPEGPEAAQGGPESKAGNGQAAGSGDPEGVKAEKSSE) are disordered. The segment covering 180–189 (EGVKAEKSSE) has biased composition (basic and acidic residues).

The protein belongs to the NrdR family. It depends on Zn(2+) as a cofactor.

Its function is as follows. Negatively regulates transcription of bacterial ribonucleotide reductase nrd genes and operons by binding to NrdR-boxes. The protein is Transcriptional repressor NrdR of Saccharopolyspora erythraea (strain ATCC 11635 / DSM 40517 / JCM 4748 / NBRC 13426 / NCIMB 8594 / NRRL 2338).